The sequence spans 94 residues: DNA-directed RNA polymerase subunit Rpo11 (94 aa).

The protein belongs to the archaeal Rpo11/eukaryotic RPB11/RPC19 RNA polymerase subunit family. Part of the RNA polymerase complex.

The protein localises to the cytoplasm. The catalysed reaction is RNA(n) + a ribonucleoside 5'-triphosphate = RNA(n+1) + diphosphate. In terms of biological role, DNA-dependent RNA polymerase (RNAP) catalyzes the transcription of DNA into RNA using the four ribonucleoside triphosphates as substrates. The sequence is that of DNA-directed RNA polymerase subunit Rpo11 from Thermococcus kodakarensis (strain ATCC BAA-918 / JCM 12380 / KOD1) (Pyrococcus kodakaraensis (strain KOD1)).